The chain runs to 242 residues: tRNA pseudouridine synthase A (242 aa).

The active-site Nucleophile is aspartate 51. Substrate is bound at residue tyrosine 107.

The protein belongs to the tRNA pseudouridine synthase TruA family. Homodimer.

It carries out the reaction uridine(38/39/40) in tRNA = pseudouridine(38/39/40) in tRNA. Functionally, formation of pseudouridine at positions 38, 39 and 40 in the anticodon stem and loop of transfer RNAs. The sequence is that of tRNA pseudouridine synthase A from Helicobacter pylori (strain ATCC 700392 / 26695) (Campylobacter pylori).